The chain runs to 806 residues: Phosphatidylinositol 4-kinase beta (806 aa).

A PIK helical domain is found at L55 to S247. Disordered stretches follow at residues L69–R104 and A253–V310. Polar residues predominate over residues D283–K302. The PI3K/PI4K catalytic domain maps to E525–T791. Residues V531–G537 form a G-loop region. The segment at Q658–N666 is catalytic loop. Residues H677–T701 are activation loop.

This sequence belongs to the PI3/PI4-kinase family. Type III PI4K subfamily. It depends on Mg(2+) as a cofactor. Mn(2+) is required as a cofactor.

It is found in the endomembrane system. The protein localises to the mitochondrion outer membrane. Its subcellular location is the rough endoplasmic reticulum membrane. It carries out the reaction a 1,2-diacyl-sn-glycero-3-phospho-(1D-myo-inositol) + ATP = a 1,2-diacyl-sn-glycero-3-phospho-(1D-myo-inositol 4-phosphate) + ADP + H(+). In terms of biological role, phosphorylates phosphatidylinositol (PI) in the first committed step in the production of the second messenger inositol-1,4,5,-trisphosphate (PIP). May play an important role in the inner ear development. This Xenopus tropicalis (Western clawed frog) protein is Phosphatidylinositol 4-kinase beta (pi4kb).